Here is a 292-residue protein sequence, read N- to C-terminus: MGRQKELVSRCGEMLHIRYRLLRQALAECLGTLILVMFGCGSVAQVVLSRGTHGGFLTINLAFGFAVTLGILIAGQVSGAHLNPAVTFAMCFLAREPWIKLPIYTLAQTLGAFLGAGIVFGLYYDAIWHFADNQLFVSGPNGTAGIFATYPSGHLDMINGFFDQFIGTASLIVCVLAIVDPYNNPVPRGLEAFTVGLVVLVIGTSMGFNSGYAVNPARDFGPRLFTALAGWGSAVFTTGQHWWWVPIVSPLLGSIAGVFVYQLMIGCHLEQPPPSNEEENVKLAHVKHKEQI.

Over 1–24 (MGRQKELVSRCGEMLHIRYRLLRQ) the chain is Cytoplasmic. Residues 25–42 (ALAECLGTLILVMFGCGS) traverse the membrane as a helical segment. Residues 43–56 (VAQVVLSRGTHGGF) are Extracellular-facing. A helical membrane pass occupies residues 57–74 (LTINLAFGFAVTLGILIA). The Cytoplasmic portion of the chain corresponds to 75–78 (GQVS). Residues 79–92 (GAHLNPAVTFAMCF) constitute an intramembrane region (discontinuously helical). The NPA 1 signature appears at 83–85 (NPA). Residues 93–100 (LAREPWIK) lie on the Cytoplasmic side of the membrane. A helical transmembrane segment spans residues 101-121 (LPIYTLAQTLGAFLGAGIVFG). Over 122-159 (LYYDAIWHFADNQLFVSGPNGTAGIFATYPSGHLDMIN) the chain is Extracellular. An N-linked (GlcNAc...) asparagine glycan is attached at Asn141. Residues 160–177 (GFFDQFIGTASLIVCVLA) form a helical membrane-spanning segment. Residues 178–189 (IVDPYNNPVPRG) are Cytoplasmic-facing. Residues 190–206 (LEAFTVGLVVLVIGTSM) traverse the membrane as a helical segment. The Extracellular portion of the chain corresponds to 207–210 (GFNS). Residues 211–224 (GYAVNPARDFGPRL) constitute an intramembrane region (discontinuously helical). Positions 215–217 (NPA) match the NPA 2 motif. At 225-242 (FTALAGWGSAVFTTGQHW) the chain is on the extracellular side. A helical membrane pass occupies residues 243-264 (WWVPIVSPLLGSIAGVFVYQLM). Topologically, residues 265–292 (IGCHLEQPPPSNEEENVKLAHVKHKEQI) are cytoplasmic.

It belongs to the MIP/aquaporin (TC 1.A.8) family. As to quaternary structure, homotetramer; each monomer provides an independent glycerol/water pore. Could also exist in other oligomeric states. Widely expressed in epithelial cells of kidney (collecting ducts) and airways, in keratinocytes, immature dendritic cells and erythrocytes. Isoform 2 is not detectable in erythrocytes at the protein level.

The protein resides in the cell membrane. It localises to the basolateral cell membrane. The catalysed reaction is glycerol(in) = glycerol(out). It carries out the reaction H2O(in) = H2O(out). It catalyses the reaction H2O2(out) = H2O2(in). The enzyme catalyses urea(in) = urea(out). Glycerol transport is regulated by pH, with the porin being permeable to glycerol at pH 7.4 but not at pH 5.5. Water permeability, however, is not influenced by pH. Its function is as follows. Aquaglyceroporins form homotetrameric transmembrane channels, with each monomer independently mediating glycerol and water transport across the plasma membrane along their osmotic gradient. Could also be permeable to urea. Also participates in cell permeability to H2O2 and H2O2-mediated signaling. In skin, transports glycerol to the epidermis and stratum corneum, where it maintains hydration, elasticity, and supports lipid biosynthesis for barrier repair. In kidney, contributes to the reabsorption of water, helping the body maintain proper fluid balance. This Homo sapiens (Human) protein is Aquaporin-3.